A 402-amino-acid polypeptide reads, in one-letter code: 4-hydroxy-3-methylbut-2-enyl diphosphate reductase (402 aa).

Residue Cys66 coordinates [4Fe-4S] cluster. His96 contacts (2E)-4-hydroxy-3-methylbut-2-enyl diphosphate. Dimethylallyl diphosphate is bound at residue His96. His96 provides a ligand contact to isopentenyl diphosphate. Cys157 serves as a coordination point for [4Fe-4S] cluster. Position 185 (His185) interacts with (2E)-4-hydroxy-3-methylbut-2-enyl diphosphate. His185 contacts dimethylallyl diphosphate. His185 contacts isopentenyl diphosphate. Catalysis depends on Glu187, which acts as the Proton donor. Residue Thr250 participates in (2E)-4-hydroxy-3-methylbut-2-enyl diphosphate binding. Residue Cys288 participates in [4Fe-4S] cluster binding. Positions 317, 318, 319, and 379 each coordinate (2E)-4-hydroxy-3-methylbut-2-enyl diphosphate. 4 residues coordinate dimethylallyl diphosphate: Ser317, Ser318, Asn319, and Ser379. Ser317, Ser318, Asn319, and Ser379 together coordinate isopentenyl diphosphate.

Belongs to the IspH family. Requires [4Fe-4S] cluster as cofactor.

It carries out the reaction isopentenyl diphosphate + 2 oxidized [2Fe-2S]-[ferredoxin] + H2O = (2E)-4-hydroxy-3-methylbut-2-enyl diphosphate + 2 reduced [2Fe-2S]-[ferredoxin] + 2 H(+). The enzyme catalyses dimethylallyl diphosphate + 2 oxidized [2Fe-2S]-[ferredoxin] + H2O = (2E)-4-hydroxy-3-methylbut-2-enyl diphosphate + 2 reduced [2Fe-2S]-[ferredoxin] + 2 H(+). The protein operates within isoprenoid biosynthesis; dimethylallyl diphosphate biosynthesis; dimethylallyl diphosphate from (2E)-4-hydroxy-3-methylbutenyl diphosphate: step 1/1. Its pathway is isoprenoid biosynthesis; isopentenyl diphosphate biosynthesis via DXP pathway; isopentenyl diphosphate from 1-deoxy-D-xylulose 5-phosphate: step 6/6. In terms of biological role, catalyzes the conversion of 1-hydroxy-2-methyl-2-(E)-butenyl 4-diphosphate (HMBPP) into a mixture of isopentenyl diphosphate (IPP) and dimethylallyl diphosphate (DMAPP). Acts in the terminal step of the DOXP/MEP pathway for isoprenoid precursor biosynthesis. The sequence is that of 4-hydroxy-3-methylbut-2-enyl diphosphate reductase from Gloeothece citriformis (strain PCC 7424) (Cyanothece sp. (strain PCC 7424)).